Reading from the N-terminus, the 88-residue chain is Conotoxin MaIr34 (88 aa).

Positions 1–21 (MKLTCVIVAVLFLTAWTFVMA) are cleaved as a signal peptide. Residues 22-53 (DDPRDGPDTAVRGGKRFWKARNEMNSAASKLN) constitute a propeptide that is removed on maturation. 3 disulfides stabilise this stretch: Cys57–Cys75, Cys64–Cys79, and Cys74–Cys83.

The protein belongs to the conotoxin O1 superfamily. As to expression, expressed by the venom duct.

The protein resides in the secreted. This is Conotoxin MaIr34 from Conus marmoreus (Marble cone).